Consider the following 195-residue polypeptide: Probable GTP-binding protein EngB (195 aa).

An EngB-type G domain is found at 22-195 (GLPEIALAGR…WGAIKKMISR (174 aa)). GTP-binding positions include 30 to 37 (GRSNVGKS), 57 to 61 (GKTQT), 75 to 78 (DVPG), 142 to 145 (TKAD), and 174 to 176 (FSS). Mg(2+) is bound by residues S37 and T59.

It belongs to the TRAFAC class TrmE-Era-EngA-EngB-Septin-like GTPase superfamily. EngB GTPase family. The cofactor is Mg(2+).

Necessary for normal cell division and for the maintenance of normal septation. The sequence is that of Probable GTP-binding protein EngB from Bacillus velezensis (strain DSM 23117 / BGSC 10A6 / LMG 26770 / FZB42) (Bacillus amyloliquefaciens subsp. plantarum).